The sequence spans 151 residues: MYPAHLLVLLAVCVSLLGAASIPARPLNLYQFGNMIQCANHGRRPTRHYMDYGCYCGKGGSGTPVDELDRCCQTHDDCYGEAEKLPACNYMMSGPYYNTYSYECNDGELTCKDNNDECKAFICNCDRTAAICFARAPYNDANWNIDTKTRC.

A signal peptide spans 1–27 (MYPAHLLVLLAVCVSLLGAASIPARPL). 7 disulfide bridges follow: Cys38–Cys104, Cys54–Cys151, Cys56–Cys72, Cys71–Cys132, Cys78–Cys125, Cys88–Cys118, and Cys111–Cys123. 3 residues coordinate Ca(2+): Tyr55, Gly57, and Gly59. The active site involves His75. Position 76 (Asp76) interacts with Ca(2+). Residue Asp126 is part of the active site.

Belongs to the phospholipase A2 family. Group I subfamily. D49 sub-subfamily. Requires Ca(2+) as cofactor. In terms of tissue distribution, expressed by the venom gland.

It localises to the secreted. The catalysed reaction is a 1,2-diacyl-sn-glycero-3-phosphocholine + H2O = a 1-acyl-sn-glycero-3-phosphocholine + a fatty acid + H(+). PLA2 catalyzes the calcium-dependent hydrolysis of the 2-acyl groups in 3-sn-phosphoglycerides. This is Acidic phospholipase A2 2 from Tropidechis carinatus (Australian rough-scaled snake).